The sequence spans 165 residues: 3-isopropylmalate dehydratase small subunit (165 aa).

This sequence belongs to the LeuD family. LeuD type 2 subfamily. As to quaternary structure, heterodimer of LeuC and LeuD.

The catalysed reaction is (2R,3S)-3-isopropylmalate = (2S)-2-isopropylmalate. It functions in the pathway amino-acid biosynthesis; L-leucine biosynthesis; L-leucine from 3-methyl-2-oxobutanoate: step 2/4. Functionally, catalyzes the isomerization between 2-isopropylmalate and 3-isopropylmalate, via the formation of 2-isopropylmaleate. In Saccharolobus islandicus (strain M.14.25 / Kamchatka #1) (Sulfolobus islandicus), this protein is 3-isopropylmalate dehydratase small subunit.